Reading from the N-terminus, the 689-residue chain is PR domain zinc finger protein 8 (689 aa).

In terms of domain architecture, SET spans 16-131; it reads KAVQQCLTDI…KDEELLVWYG (116 aa). Tyrosine 130 contributes to the S-adenosyl-L-methionine binding site. The C2H2-type 1 zinc finger occupies 155 to 183; sequence YTCLECSQRFQFEFPYVAHLRFRCPKRLH. 2 disordered regions span residues 185 to 333 and 397 to 506; these read ADIS…VGGR and SLQE…QPAR. Positions 193–210 are enriched in gly residues; sequence QGGGVGTKDHGGGGGGGK. Composition is skewed to low complexity over residues 241-258 and 273-286; these read PESSNPSAAAGGSSAKPS and GGSSCSPAQSLSSG. Residues 322–333 are compositionally biased toward gly residues; that stretch reads EGGGGAGLVGGR. The segment covering 423 to 433 has biased composition (low complexity); that stretch reads STPAAASPVGA. Residues 472 to 491 are compositionally biased toward gly residues; sequence TSGGGGTGAGAAGGAGGGQG. 2 consecutive C2H2-type zinc fingers follow at residues 625–648 and 666–688; these read NWCAKCNASFRMTSDLVYHMRSHH and LKCPICNESFRERHHLSRHMTSH.

This sequence belongs to the class V-like SAM-binding methyltransferase superfamily. As to quaternary structure, interacts with EPM2A and NHLRC1. This interaction sequesters EPM2A and NHLRC1 to the nucleus. Interacts with BHLHE22. As to expression, expressed in brain, heart, skeletal muscle, testes, prostate.

It is found in the nucleus. Probable histone methyltransferase, preferentially acting on 'Lys-9' of histone H3. Involved in the control of steroidogenesis through transcriptional repression of steroidogenesis marker genes such as CYP17A1 and LHCGR. Forms with BHLHE22 a transcriptional repressor complex controlling genes involved in neural development and neuronal differentiation. In the retina, it is required for rod bipolar and type 2 OFF-cone bipolar cell survival. This Homo sapiens (Human) protein is PR domain zinc finger protein 8 (PRDM8).